The primary structure comprises 485 residues: Glutamyl-tRNA(Gln) amidotransferase subunit A (485 aa).

Residues Lys79 and Ser154 each act as charge relay system in the active site. Ser178 serves as the catalytic Acyl-ester intermediate.

The protein belongs to the amidase family. GatA subfamily. As to quaternary structure, heterotrimer of A, B and C subunits.

The catalysed reaction is L-glutamyl-tRNA(Gln) + L-glutamine + ATP + H2O = L-glutaminyl-tRNA(Gln) + L-glutamate + ADP + phosphate + H(+). In terms of biological role, allows the formation of correctly charged Gln-tRNA(Gln) through the transamidation of misacylated Glu-tRNA(Gln) in organisms which lack glutaminyl-tRNA synthetase. The reaction takes place in the presence of glutamine and ATP through an activated gamma-phospho-Glu-tRNA(Gln). The chain is Glutamyl-tRNA(Gln) amidotransferase subunit A from Bacillus velezensis (strain DSM 23117 / BGSC 10A6 / LMG 26770 / FZB42) (Bacillus amyloliquefaciens subsp. plantarum).